A 913-amino-acid chain; its full sequence is MGCPAVEARRWGDMWLVVAFCLLGHGHAAVTKEEKAHLRSQVLEMFDHAYGNYMQHAYPADELMPLTCRGRIRGQEPSRGDVDDALGKFSLTLIDTLDTLVVLNKTKEFEDAVRKVITDVNLDNDIVVSVFETNIRVLGGLLGGHSVAIMLKENGDGMQWYNDELLHMAKELGYKLLPAFNTTSGLPYPRINLKFGIRRPEARTGTETDTCTACAGTMILEFAALSRFTGISVFEEHARKALDFLWDKRQRSSNLVGVTINIHTGDWVRKDSGVGAGIDSYYEYLLKAYVLLGDDSYLERFNTHYDAIMRYISQPPLLLDVHIHKPMLTARTWMDSLLAFFPGLQVLKGDIRPAIETHEMLYQVIKKHNFLPEAFTTDFRVHWAQHPLRPEFAESTYFLYKATGDPYYLEVGKTLIDNLNKYARVPCGFAAVKDVRTGSHEDRMDSFFLAEMFKYLYLLFSEREDLIFDIEDYIFTTEAHLLPLSLSTANPSSTKKNTTTQYTELDDSNFDWSCPNTQILFRNDPMYAQNIREPLKNVVDKNCPRSPSRLDEISGSGKMPPLRARDFMASNSEHLEILKKMGVSLIHLKDGRVQLVQHANQAASSIDAEDGLRFMQEMIELSSQQQKEQQLPPRAVQIVSHPFYGRVVLTAGPAQFGMDLSKHLAGAQGLVARAEPYSGCSDITNGQAIQGKIALMQRGQCMFAEKARNVQKAGAIGGIVIDDNEGSSSDTAPLFQMAGDGKSTDDVTIPMLFLFSKEGNIILDAIREYQQVEVLLSDKAKDRDLESESGEQKPVENDSQKQALEDLFMTPEEIAELLIVHEEESPVSQPEVPSSDSPSGGDRTSERDITPESQEHKTEETEHSPKDNVQTPPENSEDSTEEKMDNKVQPMESILADWKEDIEAFEMMEKDEL.

The first 15 residues, 1–15 (MGCPAVEARRWGDMW), serve as a signal peptide directing secretion. The N-linked (GlcNAc...) asparagine glycan is linked to N104. Catalysis depends on E132, which acts as the Proton donor. N-linked (GlcNAc...) asparagine glycosylation occurs at N181. D279 is an active-site residue. The active-site Proton donor is the E373. E391 is a catalytic residue. Residue T477 participates in Ca(2+) binding. Residue N497 is glycosylated (N-linked (GlcNAc...) asparagine). A PA domain is found at 660-766 (LSKHLAGAQG…KEGNIILDAI (107 aa)). The N-linked (GlcNAc...) asparagine glycan is linked to N797. Residues 823-895 (EESPVSQPEV…NKVQPMESIL (73 aa)) form a disordered region. Over residues 826–839 (PVSQPEVPSSDSPS) the composition is skewed to low complexity. The segment covering 843 to 866 (RTSERDITPESQEHKTEETEHSPK) has biased composition (basic and acidic residues). The Prevents secretion from ER motif lies at 910–913 (KDEL).

Belongs to the glycosyl hydrolase 47 family. Ca(2+) is required as a cofactor.

It is found in the endoplasmic reticulum lumen. The catalysed reaction is N(4)-(alpha-D-Man-(1-&gt;2)-alpha-D-Man-(1-&gt;2)-alpha-D-Man-(1-&gt;3)-[alpha-D-Man-(1-&gt;2)-alpha-D-Man-(1-&gt;3)-[alpha-D-Man-(1-&gt;2)-alpha-D-Man-(1-&gt;6)]-alpha-D-Man-(1-&gt;6)]-beta-D-Man-(1-&gt;4)-beta-D-GlcNAc-(1-&gt;4)-beta-D-GlcNAc)-L-asparaginyl-[protein] (N-glucan mannose isomer 9A1,2,3B1,2,3) + 4 H2O = N(4)-(alpha-D-Man-(1-&gt;3)-[alpha-D-Man-(1-&gt;3)-[alpha-D-Man-(1-&gt;6)]-alpha-D-Man-(1-&gt;6)]-beta-D-Man-(1-&gt;4)-beta-D-GlcNAc-(1-&gt;4)-beta-D-GlcNAc)-L-asparaginyl-[protein] (N-glucan mannose isomer 5A1,2) + 4 beta-D-mannose. It catalyses the reaction N(4)-(alpha-D-Man-(1-&gt;2)-alpha-D-Man-(1-&gt;2)-alpha-D-Man-(1-&gt;3)-[alpha-D-Man-(1-&gt;3)-[alpha-D-Man-(1-&gt;2)-alpha-D-Man-(1-&gt;6)]-alpha-D-Man-(1-&gt;6)]-beta-D-Man-(1-&gt;4)-beta-D-GlcNAc-(1-&gt;4)-beta-D-GlcNAc)-L-asparaginyl-[protein] (N-glucan mannose isomer 8A1,2,3B1,3) + 3 H2O = N(4)-(alpha-D-Man-(1-&gt;3)-[alpha-D-Man-(1-&gt;3)-[alpha-D-Man-(1-&gt;6)]-alpha-D-Man-(1-&gt;6)]-beta-D-Man-(1-&gt;4)-beta-D-GlcNAc-(1-&gt;4)-beta-D-GlcNAc)-L-asparaginyl-[protein] (N-glucan mannose isomer 5A1,2) + 3 beta-D-mannose. It functions in the pathway protein modification; protein glycosylation. In terms of biological role, may be involved in endoplasmic reticulum-associated degradation (ERAD). This Xenopus laevis (African clawed frog) protein is ER degradation-enhancing alpha-mannosidase-like protein 3 (edem3).